We begin with the raw amino-acid sequence, 165 residues long: NADPH-dependent 7-cyano-7-deazaguanine reductase (165 aa).

The active-site Thioimide intermediate is the Cys56. Asp63 functions as the Proton donor in the catalytic mechanism. Substrate-binding positions include 78 to 80 (VES) and 97 to 98 (HE).

It belongs to the GTP cyclohydrolase I family. QueF type 1 subfamily.

The protein localises to the cytoplasm. It carries out the reaction 7-aminomethyl-7-carbaguanine + 2 NADP(+) = 7-cyano-7-deazaguanine + 2 NADPH + 3 H(+). Its pathway is tRNA modification; tRNA-queuosine biosynthesis. In terms of biological role, catalyzes the NADPH-dependent reduction of 7-cyano-7-deazaguanine (preQ0) to 7-aminomethyl-7-deazaguanine (preQ1). This Bacillus pumilus (strain SAFR-032) protein is NADPH-dependent 7-cyano-7-deazaguanine reductase.